Here is a 473-residue protein sequence, read N- to C-terminus: Glutamate--tRNA ligase (473 aa).

A 'HIGH' region motif is present at residues 11–21 (PSPTGFLHIGG). The 'KMSKS' region signature appears at 240-244 (KLSKR). Position 243 (K243) interacts with ATP.

This sequence belongs to the class-I aminoacyl-tRNA synthetase family. Glutamate--tRNA ligase type 1 subfamily. Monomer.

Its subcellular location is the cytoplasm. The enzyme catalyses tRNA(Glu) + L-glutamate + ATP = L-glutamyl-tRNA(Glu) + AMP + diphosphate. In terms of biological role, catalyzes the attachment of glutamate to tRNA(Glu) in a two-step reaction: glutamate is first activated by ATP to form Glu-AMP and then transferred to the acceptor end of tRNA(Glu). This is Glutamate--tRNA ligase from Rhodopseudomonas palustris (strain ATCC BAA-98 / CGA009).